The chain runs to 66 residues: Large ribosomal subunit protein bL31 (66 aa).

Positions 16, 18, 36, and 39 each coordinate Zn(2+).

Belongs to the bacterial ribosomal protein bL31 family. Type A subfamily. Part of the 50S ribosomal subunit. The cofactor is Zn(2+).

In terms of biological role, binds the 23S rRNA. This chain is Large ribosomal subunit protein bL31, found in Sulfurovum sp. (strain NBC37-1).